The chain runs to 119 residues: Large ribosomal subunit protein uL14 (119 aa).

The protein belongs to the universal ribosomal protein uL14 family. In terms of assembly, part of the 50S ribosomal subunit. Forms a cluster with proteins L3 and L19. In the 70S ribosome, L14 and L19 interact and together make contacts with the 16S rRNA in bridges B5 and B8.

Binds to 23S rRNA. Forms part of two intersubunit bridges in the 70S ribosome. The sequence is that of Large ribosomal subunit protein uL14 from Ehrlichia chaffeensis (strain ATCC CRL-10679 / Arkansas).